A 421-amino-acid chain; its full sequence is Acetate kinase (421 aa).

Position 7 (asparagine 7) interacts with Mg(2+). Lysine 14 contacts ATP. Arginine 91 serves as a coordination point for substrate. Residue aspartate 148 is the Proton donor/acceptor of the active site. ATP contacts are provided by residues 208-212 (HIGNG) and 283-285 (DRR). Glutamate 387 provides a ligand contact to Mg(2+).

Belongs to the acetokinase family. In terms of assembly, homodimer. Requires Mg(2+) as cofactor. It depends on Mn(2+) as a cofactor.

It is found in the cytoplasm. The enzyme catalyses acetate + ATP = acetyl phosphate + ADP. The protein operates within metabolic intermediate biosynthesis; acetyl-CoA biosynthesis; acetyl-CoA from acetate: step 1/2. In terms of biological role, catalyzes the formation of acetyl phosphate from acetate and ATP. Can also catalyze the reverse reaction. The chain is Acetate kinase from Geobacter sulfurreducens (strain ATCC 51573 / DSM 12127 / PCA).